Consider the following 176-residue polypeptide: Peptidyl-prolyl cis-trans isomerase cyp6 (176 aa).

The 164-residue stretch at 10–173 folds into the PPIase cyclophilin-type domain; that stretch reads FFDIAVNGQH…AKIEITDCGE (164 aa).

This sequence belongs to the cyclophilin-type PPIase family.

It carries out the reaction [protein]-peptidylproline (omega=180) = [protein]-peptidylproline (omega=0). Functionally, PPIases accelerate the folding of proteins. It catalyzes the cis-trans isomerization of proline imidic peptide bonds in oligopeptides. This Rhizopus delemar (strain RA 99-880 / ATCC MYA-4621 / FGSC 9543 / NRRL 43880) (Mucormycosis agent) protein is Peptidyl-prolyl cis-trans isomerase cyp6 (cyp6).